Reading from the N-terminus, the 224-residue chain is Ribose-5-phosphate isomerase A (224 aa).

Substrate is bound by residues 32–35 (TGST), 85–88 (DGAD), and 98–101 (KGGG). The active-site Proton acceptor is Glu107. Residue Lys125 coordinates substrate.

Belongs to the ribose 5-phosphate isomerase family. As to quaternary structure, homodimer.

It catalyses the reaction aldehydo-D-ribose 5-phosphate = D-ribulose 5-phosphate. The protein operates within carbohydrate degradation; pentose phosphate pathway; D-ribose 5-phosphate from D-ribulose 5-phosphate (non-oxidative stage): step 1/1. Functionally, catalyzes the reversible conversion of ribose-5-phosphate to ribulose 5-phosphate. This chain is Ribose-5-phosphate isomerase A, found in Pseudomonas fluorescens (strain Pf0-1).